A 184-amino-acid polypeptide reads, in one-letter code: UPF0397 protein SA2477 (184 aa).

The next 5 membrane-spanning stretches (helical) occupy residues 11 to 31 (VVAIGIGAAVFVILGRFVVIP), 44 to 64 (AFLALISAIFGPFAGLMTGLV), 77 to 97 (AWWSWVICSGIIGCLYGWIGL), 111 to 131 (MIYFNIGQIIANIICWALIAP), and 148 to 168 (QGVISAVLNIISVGIIGTILL).

This sequence belongs to the UPF0397 family.

The protein resides in the cell membrane. In Staphylococcus aureus (strain N315), this protein is UPF0397 protein SA2477.